The chain runs to 107 residues: Large ribosomal subunit protein uL24 (107 aa).

This sequence belongs to the universal ribosomal protein uL24 family. As to quaternary structure, part of the 50S ribosomal subunit.

Functionally, one of two assembly initiator proteins, it binds directly to the 5'-end of the 23S rRNA, where it nucleates assembly of the 50S subunit. Its function is as follows. One of the proteins that surrounds the polypeptide exit tunnel on the outside of the subunit. This chain is Large ribosomal subunit protein uL24, found in Mesomycoplasma hyopneumoniae (strain J / ATCC 25934 / NCTC 10110) (Mycoplasma hyopneumoniae).